The primary structure comprises 89 residues: Small ribosomal subunit protein uS15 (89 aa).

This sequence belongs to the universal ribosomal protein uS15 family. In terms of assembly, part of the 30S ribosomal subunit. Forms a bridge to the 50S subunit in the 70S ribosome, contacting the 23S rRNA.

One of the primary rRNA binding proteins, it binds directly to 16S rRNA where it helps nucleate assembly of the platform of the 30S subunit by binding and bridging several RNA helices of the 16S rRNA. Its function is as follows. Forms an intersubunit bridge (bridge B4) with the 23S rRNA of the 50S subunit in the ribosome. The chain is Small ribosomal subunit protein uS15 from Granulibacter bethesdensis (strain ATCC BAA-1260 / CGDNIH1).